The primary structure comprises 268 residues: Zinc transporter ZupT (268 aa).

Transmembrane regions (helical) follow at residues 6-26 (IIFA…GGVI), 37-57 (FLAG…FVEI), 73-93 (GGNW…AVID), 126-146 (VLTA…TFVA), 153-173 (IAIP…IAVA), 189-209 (WATL…ILLM), 211-231 (FLGP…MVFI), and 248-268 (TAIY…LLFI). Asparagine 136 and glutamate 139 together coordinate Fe(2+). Zn(2+)-binding residues include glutamate 139 and histidine 164. Fe(2+)-binding residues include asparagine 165, glutamate 168, and glutamate 197. Zn(2+) is bound at residue glutamate 168.

It belongs to the ZIP transporter (TC 2.A.5) family. ZupT subfamily.

The protein localises to the cell membrane. It carries out the reaction Zn(2+)(in) = Zn(2+)(out). In terms of biological role, mediates zinc uptake. May also transport other divalent cations. This chain is Zinc transporter ZupT, found in Corynebacterium efficiens (strain DSM 44549 / YS-314 / AJ 12310 / JCM 11189 / NBRC 100395).